The following is a 74-amino-acid chain: Antitoxin VapB39 (74 aa).

Functionally, antitoxin component of a type II toxin-antitoxin (TA) system. The chain is Antitoxin VapB39 (vapB39) from Mycobacterium tuberculosis (strain CDC 1551 / Oshkosh).